The following is a 331-amino-acid chain: Phosphate acyltransferase (331 aa).

This sequence belongs to the PlsX family. In terms of assembly, homodimer. Probably interacts with PlsY.

Its subcellular location is the cytoplasm. The enzyme catalyses a fatty acyl-[ACP] + phosphate = an acyl phosphate + holo-[ACP]. Its pathway is lipid metabolism; phospholipid metabolism. Functionally, catalyzes the reversible formation of acyl-phosphate (acyl-PO(4)) from acyl-[acyl-carrier-protein] (acyl-ACP). This enzyme utilizes acyl-ACP as fatty acyl donor, but not acyl-CoA. The protein is Phosphate acyltransferase of Lactococcus lactis subsp. cremoris (strain SK11).